A 136-amino-acid polypeptide reads, in one-letter code: Large ribosomal subunit protein uL16 (136 aa).

This sequence belongs to the universal ribosomal protein uL16 family. As to quaternary structure, part of the 50S ribosomal subunit.

Binds 23S rRNA and is also seen to make contacts with the A and possibly P site tRNAs. This is Large ribosomal subunit protein uL16 from Mannheimia succiniciproducens (strain KCTC 0769BP / MBEL55E).